Consider the following 200-residue polypeptide: Ribosomal RNA large subunit methyltransferase E (200 aa).

Positions 49, 51, 69, 87, and 111 each coordinate S-adenosyl-L-methionine. Residue lysine 151 is the Proton acceptor of the active site.

Belongs to the class I-like SAM-binding methyltransferase superfamily. RNA methyltransferase RlmE family.

It is found in the cytoplasm. The enzyme catalyses uridine(2552) in 23S rRNA + S-adenosyl-L-methionine = 2'-O-methyluridine(2552) in 23S rRNA + S-adenosyl-L-homocysteine + H(+). Functionally, specifically methylates the uridine in position 2552 of 23S rRNA at the 2'-O position of the ribose in the fully assembled 50S ribosomal subunit. The protein is Ribosomal RNA large subunit methyltransferase E of Lawsonia intracellularis (strain PHE/MN1-00).